The chain runs to 1058 residues: Isoleucine--tRNA ligase (1058 aa).

The 'HIGH' region signature appears at 48–58 (PYTTGHIHLGT). The 'KMSKS' region motif lies at 596–600 (KMSKS). ATP is bound at residue K599.

Belongs to the class-I aminoacyl-tRNA synthetase family. IleS type 2 subfamily. As to quaternary structure, monomer. Zn(2+) is required as a cofactor.

It localises to the cytoplasm. The enzyme catalyses tRNA(Ile) + L-isoleucine + ATP = L-isoleucyl-tRNA(Ile) + AMP + diphosphate. Its function is as follows. Catalyzes the attachment of isoleucine to tRNA(Ile). As IleRS can inadvertently accommodate and process structurally similar amino acids such as valine, to avoid such errors it has two additional distinct tRNA(Ile)-dependent editing activities. One activity is designated as 'pretransfer' editing and involves the hydrolysis of activated Val-AMP. The other activity is designated 'posttransfer' editing and involves deacylation of mischarged Val-tRNA(Ile). The polypeptide is Isoleucine--tRNA ligase (Methanosarcina acetivorans (strain ATCC 35395 / DSM 2834 / JCM 12185 / C2A)).